The sequence spans 436 residues: Elongation factor 1-alpha (436 aa).

A tr-type G domain is found at 8–232; the sequence is KPHLNMIVTG…DDFKMAEKPV (225 aa). Residues 17-24 are G1; sequence GHIDNGKS. 17 to 24 contributes to the GTP binding site; that stretch reads GHIDNGKS. Serine 24 is a binding site for Mg(2+). A G2 region spans residues 74–78; that stretch reads GITID. The tract at residues 95-98 is G3; sequence DAPG. GTP contacts are provided by residues 95–99 and 157–160; these read DAPGH and NKMD. The tract at residues 157 to 160 is G4; it reads NKMD. The tract at residues 196–198 is G5; it reads SGW.

Belongs to the TRAFAC class translation factor GTPase superfamily. Classic translation factor GTPase family. EF-Tu/EF-1A subfamily.

It localises to the cytoplasm. The enzyme catalyses GTP + H2O = GDP + phosphate + H(+). Functionally, GTP hydrolase that promotes the GTP-dependent binding of aminoacyl-tRNA to the A-site of ribosomes during protein biosynthesis. This Cenarchaeum symbiosum (strain A) protein is Elongation factor 1-alpha.